The following is a 1164-amino-acid chain: Phospholipid-transporting ATPase IA (1164 aa).

The Cytoplasmic portion of the chain corresponds to M1–L65. Phosphoserine is present on S25. Position 28 is a phosphothreonine (T28). S29 carries the phosphoserine modification. A helical membrane pass occupies residues P66–L86. At L87–D92 the chain is on the exoplasmic loop side. The helical transmembrane segment at V93 to K115 threads the bilayer. Over E116–Q297 the chain is Cytoplasmic. A helical membrane pass occupies residues I298–W319. Over N320 to F344 the chain is Exoplasmic loop. A helical membrane pass occupies residues L345–V366. The Cytoplasmic portion of the chain corresponds to K367–K857. D409 functions as the 4-aspartylphosphate intermediate in the catalytic mechanism. Residues D409, K410, and T411 each coordinate ATP. D409 contacts Mg(2+). T411 serves as a coordination point for Mg(2+). S443 carries the phosphoserine modification. ATP contacts are provided by residues E508, F549, K572, R605, T685, G686, D687, A741–T748, R775, and K781. D801 lines the Mg(2+) pocket. ATP is bound by residues N804 and D805. A Mg(2+)-binding site is contributed by D805. A helical transmembrane segment spans residues C858–F878. The Exoplasmic loop portion of the chain corresponds to V879 to R890. A helical membrane pass occupies residues W891–I910. The Cytoplasmic portion of the chain corresponds to F911–V940. The helical transmembrane segment at F941 to A962 threads the bilayer. Over L963–D976 the chain is Exoplasmic loop. A helical membrane pass occupies residues Y977–E999. The Cytoplasmic portion of the chain corresponds to T1000–W1005. A helical transmembrane segment spans residues F1006–S1026. At S1027–M1044 the chain is on the exoplasmic loop side. A helical membrane pass occupies residues L1045 to K1070. Residues V1071–W1164 lie on the Cytoplasmic side of the membrane. Residue G1095–S1102 coordinates ATP. The residue at position 1126 (S1126) is a Phosphoserine.

It belongs to the cation transport ATPase (P-type) (TC 3.A.3) family. Type IV subfamily. In terms of assembly, component of a P4-ATPase flippase complex which consists of a catalytic alpha subunit and an accessory beta subunit. Interacts with TMEM30A to form a flippase complex; this complex forms an intermediate phosphoenzyme. Interacts with TMEM30B; this interaction is reported conflictingly. The cofactor is Mg(2+). Cleaved by calpain in a caspase- and calcium influx-dependent manner during platelet apoptosis leading to a 100 kDa polypeptide. In terms of tissue distribution, found in most adult tissues except liver, testis and placenta. Most abundant in heart, brain and skeletal muscle. Also detected in fetal tissues. Isoform 1 is only detected in brain, skeletal muscle and heart and is the most abundant form in skeletal muscle. Highly expressed in platelets.

It is found in the cytoplasmic vesicle. Its subcellular location is the secretory vesicle. The protein localises to the chromaffin granule membrane. The protein resides in the cytoplasmic granule. It localises to the cell membrane. It is found in the endoplasmic reticulum. Its subcellular location is the golgi apparatus. It carries out the reaction ATP + H2O + phospholipidSide 1 = ADP + phosphate + phospholipidSide 2.. The catalysed reaction is a 1,2-diacyl-sn-glycero-3-phospho-L-serine(out) + ATP + H2O = a 1,2-diacyl-sn-glycero-3-phospho-L-serine(in) + ADP + phosphate + H(+). Its activity is regulated as follows. ATPase activity is stimulated by phosphatidylserine (PS) and minimally by phosphatidylethanolamine (PE). ATPase activity is inhibited by beryllium fluoride and aluminum trifluoride. Functionally, catalytic component of a P4-ATPase flippase complex which catalyzes the hydrolysis of ATP coupled to the transport of aminophospholipids from the outer to the inner leaflet of various membranes and ensures the maintenance of asymmetric distribution of phospholipids. Phospholipid translocation also seems to be implicated in vesicle formation and in uptake of lipid signaling molecules. In vitro, its ATPase activity is selectively and stereospecifically stimulated by phosphatidylserine (PS). The flippase complex ATP8A1:TMEM30A seems to play a role in regulation of cell migration probably involving flippase-mediated translocation of phosphatidylethanolamine (PE) at the cell membrane. Acts as aminophospholipid translocase at the cell membrane in neuronal cells. This is Phospholipid-transporting ATPase IA from Homo sapiens (Human).